Reading from the N-terminus, the 58-residue chain is MELVKCQPGICNCSCKPESLIPTTTSTSTTTTSTTTSTTTSTTTTTTTTTTKDFNTET.

Low complexity predominate over residues 23–51 (TTTSTSTTTTSTTTSTTTSTTTTTTTTTT). Residues 23–58 (TTTSTSTTTTSTTTSTTTSTTTTTTTTTTKDFNTET) are disordered.

This is an uncharacterized protein from Dictyostelium discoideum (Social amoeba).